Reading from the N-terminus, the 412-residue chain is Exodeoxyribonuclease 7 large subunit (412 aa).

This sequence belongs to the XseA family. Heterooligomer composed of large and small subunits.

The protein resides in the cytoplasm. The catalysed reaction is Exonucleolytic cleavage in either 5'- to 3'- or 3'- to 5'-direction to yield nucleoside 5'-phosphates.. In terms of biological role, bidirectionally degrades single-stranded DNA into large acid-insoluble oligonucleotides, which are then degraded further into small acid-soluble oligonucleotides. This chain is Exodeoxyribonuclease 7 large subunit, found in Nostoc sp. (strain PCC 7120 / SAG 25.82 / UTEX 2576).